The chain runs to 87 residues: Translation initiation factor IF-1 (87 aa).

In terms of domain architecture, S1-like spans 16–87; the sequence is LSKEDVIEME…TKGRISYRHK (72 aa).

Belongs to the IF-1 family. As to quaternary structure, component of the 30S ribosomal translation pre-initiation complex which assembles on the 30S ribosome in the order IF-2 and IF-3, IF-1 and N-formylmethionyl-tRNA(fMet); mRNA recruitment can occur at any time during PIC assembly.

Its subcellular location is the cytoplasm. Functionally, one of the essential components for the initiation of protein synthesis. Stabilizes the binding of IF-2 and IF-3 on the 30S subunit to which N-formylmethionyl-tRNA(fMet) subsequently binds. Helps modulate mRNA selection, yielding the 30S pre-initiation complex (PIC). Upon addition of the 50S ribosomal subunit IF-1, IF-2 and IF-3 are released leaving the mature 70S translation initiation complex. This chain is Translation initiation factor IF-1, found in Magnetococcus marinus (strain ATCC BAA-1437 / JCM 17883 / MC-1).